A 139-amino-acid chain; its full sequence is Protein Turandot B (139 aa).

The signal sequence occupies residues 1–21 (MNFNMSMICFALLLIVTLCSA).

The protein belongs to the Turandot family.

It localises to the secreted. Functionally, a humoral factor that may play a role in stress tolerance. The protein is Protein Turandot B of Drosophila yakuba (Fruit fly).